We begin with the raw amino-acid sequence, 181 residues long: CDP-archaeol synthase (181 aa).

A run of 5 helical transmembrane segments spans residues 7-27 (VVVA…AVLA), 55-75 (AVGT…RPAA), 80-100 (GVVL…GAMV), 128-148 (FVVV…GDTF), and 150-170 (LPVL…TNGI).

This sequence belongs to the CDP-archaeol synthase family. Mg(2+) serves as cofactor.

The protein resides in the cell membrane. The catalysed reaction is 2,3-bis-O-(geranylgeranyl)-sn-glycerol 1-phosphate + CTP + H(+) = CDP-2,3-bis-O-(geranylgeranyl)-sn-glycerol + diphosphate. It functions in the pathway membrane lipid metabolism; glycerophospholipid metabolism. Functionally, catalyzes the formation of CDP-2,3-bis-(O-geranylgeranyl)-sn-glycerol (CDP-archaeol) from 2,3-bis-(O-geranylgeranyl)-sn-glycerol 1-phosphate (DGGGP) and CTP. This reaction is the third ether-bond-formation step in the biosynthesis of archaeal membrane lipids. The sequence is that of CDP-archaeol synthase from Halobacterium salinarum (strain ATCC 29341 / DSM 671 / R1).